Consider the following 206-residue polypeptide: Histidine biosynthesis bifunctional protein HisIE (206 aa).

Residues 1–114 (MLKKINFIDI…FQVPSENLFF (114 aa)) are phosphoribosyl-AMP cyclohydrolase. The tract at residues 115 to 206 (LHDLDCMLKF…NLKMRSNKQV (92 aa)) is phosphoribosyl-ATP pyrophosphohydrolase.

This sequence in the N-terminal section; belongs to the PRA-CH family. In the C-terminal section; belongs to the PRA-PH family.

The protein localises to the cytoplasm. The enzyme catalyses 1-(5-phospho-beta-D-ribosyl)-ATP + H2O = 1-(5-phospho-beta-D-ribosyl)-5'-AMP + diphosphate + H(+). The catalysed reaction is 1-(5-phospho-beta-D-ribosyl)-5'-AMP + H2O = 1-(5-phospho-beta-D-ribosyl)-5-[(5-phospho-beta-D-ribosylamino)methylideneamino]imidazole-4-carboxamide. Its pathway is amino-acid biosynthesis; L-histidine biosynthesis; L-histidine from 5-phospho-alpha-D-ribose 1-diphosphate: step 2/9. It functions in the pathway amino-acid biosynthesis; L-histidine biosynthesis; L-histidine from 5-phospho-alpha-D-ribose 1-diphosphate: step 3/9. This chain is Histidine biosynthesis bifunctional protein HisIE (hisI), found in Buchnera aphidicola subsp. Baizongia pistaciae (strain Bp).